An 823-amino-acid polypeptide reads, in one-letter code: Axial budding pattern protein 2 (823 aa).

Residues M1–A22 form the signal peptide. Over T23–A508 the chain is Extracellular. 16 N-linked (GlcNAc...) asparagine glycosylation sites follow: N41, N50, N96, N117, N163, N260, N266, N304, N324, N359, N382, N389, N403, N447, N451, and N495. The segment at N447–Y467 is disordered. The span at S449–Y467 shows a compositional bias: low complexity. The chain crosses the membrane as a helical span at residues C509–W529. Residues R530–L823 lie on the Cytoplasmic side of the membrane. 2 disordered regions span residues E539 to Y576 and H596 to S627. 2 stretches are compositionally biased toward polar residues: residues N552–N566 and S614–Q626. A phosphoserine mark is found at S642, S673, and S676. Disordered stretches follow at residues P700–S734 and D751–D771. Over residues D709–P724 the composition is skewed to polar residues. The segment covering T760–S769 has biased composition (low complexity).

In terms of assembly, interacts with BEM1, BUD3, BUD4, BUD5, CDC24 and CDC42. O-glycosylated by PMT4 and N-glycosylated. O-glycosylation increases activity in daughter cells by enhancing stability and promoting localization to the plasma membrane. May also be O-glycosylated by PMT1 and PMT2.

The protein localises to the cell membrane. Required for haploid cells axial budding pattern. Acts as an anchor to help direct new growth components and/or polarity establishment components like the BUD5 GTP/GDP exchange factor to localize at the cortical axial budding site. Regulates septin organization in late G1 independently of its role in polarity-axis determination. The chain is Axial budding pattern protein 2 (AXL2) from Saccharomyces cerevisiae (strain ATCC 204508 / S288c) (Baker's yeast).